The following is a 148-amino-acid chain: Arginine repressor (148 aa).

Belongs to the ArgR family.

The protein localises to the cytoplasm. It functions in the pathway amino-acid biosynthesis; L-arginine biosynthesis [regulation]. Regulates arginine biosynthesis genes. In Prosthecochloris aestuarii (strain DSM 271 / SK 413), this protein is Arginine repressor.